The primary structure comprises 469 residues: ATP-dependent protease ATPase subunit HslU (469 aa).

Residues isoleucine 24, 66–71 (GVGKTE), aspartate 282, glutamate 347, and arginine 419 each bind ATP.

Belongs to the ClpX chaperone family. HslU subfamily. A double ring-shaped homohexamer of HslV is capped on each side by a ring-shaped HslU homohexamer. The assembly of the HslU/HslV complex is dependent on binding of ATP.

The protein resides in the cytoplasm. Its function is as follows. ATPase subunit of a proteasome-like degradation complex; this subunit has chaperone activity. The binding of ATP and its subsequent hydrolysis by HslU are essential for unfolding of protein substrates subsequently hydrolyzed by HslV. HslU recognizes the N-terminal part of its protein substrates and unfolds these before they are guided to HslV for hydrolysis. The sequence is that of ATP-dependent protease ATPase subunit HslU from Listeria monocytogenes serovar 1/2a (strain ATCC BAA-679 / EGD-e).